Reading from the N-terminus, the 491-residue chain is Ketol-acid reductoisomerase (NADP(+)) (491 aa).

The region spanning 15 to 208 (AQLGKCRFMG…GGHRAGVLES (194 aa)) is the KARI N-terminal Rossmann domain. Residues 45–48 (CGAQ), Arg-68, Arg-76, Ser-78, and 108–110 (DKQ) each bind NADP(+). Residue His-132 is part of the active site. NADP(+) is bound at residue Gly-158. KARI C-terminal knotted domains lie at 209-344 (SFVA…TAPQ) and 345-484 (YEGK…MTDM). Residues Asp-217, Glu-221, Glu-389, and Glu-393 each contribute to the Mg(2+) site. Ser-414 serves as a coordination point for substrate.

This sequence belongs to the ketol-acid reductoisomerase family. Mg(2+) serves as cofactor.

It catalyses the reaction (2R)-2,3-dihydroxy-3-methylbutanoate + NADP(+) = (2S)-2-acetolactate + NADPH + H(+). The enzyme catalyses (2R,3R)-2,3-dihydroxy-3-methylpentanoate + NADP(+) = (S)-2-ethyl-2-hydroxy-3-oxobutanoate + NADPH + H(+). It functions in the pathway amino-acid biosynthesis; L-isoleucine biosynthesis; L-isoleucine from 2-oxobutanoate: step 2/4. Its pathway is amino-acid biosynthesis; L-valine biosynthesis; L-valine from pyruvate: step 2/4. In terms of biological role, involved in the biosynthesis of branched-chain amino acids (BCAA). Catalyzes an alkyl-migration followed by a ketol-acid reduction of (S)-2-acetolactate (S2AL) to yield (R)-2,3-dihydroxy-isovalerate. In the isomerase reaction, S2AL is rearranged via a Mg-dependent methyl migration to produce 3-hydroxy-3-methyl-2-ketobutyrate (HMKB). In the reductase reaction, this 2-ketoacid undergoes a metal-dependent reduction by NADPH to yield (R)-2,3-dihydroxy-isovalerate. The chain is Ketol-acid reductoisomerase (NADP(+)) from Salmonella typhimurium (strain LT2 / SGSC1412 / ATCC 700720).